A 203-amino-acid polypeptide reads, in one-letter code: NADH-quinone oxidoreductase subunit C (203 aa).

The protein belongs to the complex I 30 kDa subunit family. As to quaternary structure, NDH-1 is composed of 14 different subunits. Subunits NuoB, C, D, E, F, and G constitute the peripheral sector of the complex.

It is found in the cell inner membrane. The catalysed reaction is a quinone + NADH + 5 H(+)(in) = a quinol + NAD(+) + 4 H(+)(out). Functionally, NDH-1 shuttles electrons from NADH, via FMN and iron-sulfur (Fe-S) centers, to quinones in the respiratory chain. The immediate electron acceptor for the enzyme in this species is believed to be ubiquinone. Couples the redox reaction to proton translocation (for every two electrons transferred, four hydrogen ions are translocated across the cytoplasmic membrane), and thus conserves the redox energy in a proton gradient. The protein is NADH-quinone oxidoreductase subunit C of Bartonella tribocorum (strain CIP 105476 / IBS 506).